The chain runs to 80 residues: Exodeoxyribonuclease 7 small subunit (80 aa).

It belongs to the XseB family. As to quaternary structure, heterooligomer composed of large and small subunits.

The protein resides in the cytoplasm. The enzyme catalyses Exonucleolytic cleavage in either 5'- to 3'- or 3'- to 5'-direction to yield nucleoside 5'-phosphates.. In terms of biological role, bidirectionally degrades single-stranded DNA into large acid-insoluble oligonucleotides, which are then degraded further into small acid-soluble oligonucleotides. The chain is Exodeoxyribonuclease 7 small subunit from Pseudomonas fluorescens (strain SBW25).